The primary structure comprises 406 residues: 2,3-bisphosphoglycerate-independent phosphoglycerate mutase (406 aa).

The interval 156 to 183 (NLSDKISDSDPHSEGKPPEPIRPLDPSA) is disordered. The segment covering 160–174 (KISDSDPHSEGKPPE) has biased composition (basic and acidic residues).

Belongs to the BPG-independent phosphoglycerate mutase family. A-PGAM subfamily.

The enzyme catalyses (2R)-2-phosphoglycerate = (2R)-3-phosphoglycerate. Its pathway is carbohydrate degradation; glycolysis; pyruvate from D-glyceraldehyde 3-phosphate: step 3/5. Its function is as follows. Catalyzes the interconversion of 2-phosphoglycerate and 3-phosphoglycerate. In Thermoplasma volcanium (strain ATCC 51530 / DSM 4299 / JCM 9571 / NBRC 15438 / GSS1), this protein is 2,3-bisphosphoglycerate-independent phosphoglycerate mutase.